The sequence spans 293 residues: Urease accessory protein UreD (293 aa).

The protein belongs to the UreD family. As to quaternary structure, ureD, UreF and UreG form a complex that acts as a GTP-hydrolysis-dependent molecular chaperone, activating the urease apoprotein by helping to assemble the nickel containing metallocenter of UreC. The UreE protein probably delivers the nickel.

The protein localises to the cytoplasm. Its function is as follows. Required for maturation of urease via the functional incorporation of the urease nickel metallocenter. This is Urease accessory protein UreD from Arthrobacter sp. (strain FB24).